The chain runs to 443 residues: Light-independent protochlorophyllide reductase subunit N (443 aa).

3 residues coordinate [4Fe-4S] cluster: Cys15, Cys40, and Cys99.

Belongs to the BchN/ChlN family. In terms of assembly, protochlorophyllide reductase is composed of three subunits; BchL, BchN and BchB. Forms a heterotetramer of two BchB and two BchN subunits. It depends on [4Fe-4S] cluster as a cofactor.

It catalyses the reaction chlorophyllide a + oxidized 2[4Fe-4S]-[ferredoxin] + 2 ADP + 2 phosphate = protochlorophyllide a + reduced 2[4Fe-4S]-[ferredoxin] + 2 ATP + 2 H2O. Its pathway is porphyrin-containing compound metabolism; bacteriochlorophyll biosynthesis (light-independent). Component of the dark-operative protochlorophyllide reductase (DPOR) that uses Mg-ATP and reduced ferredoxin to reduce ring D of protochlorophyllide (Pchlide) to form chlorophyllide a (Chlide). This reaction is light-independent. The NB-protein (BchN-BchB) is the catalytic component of the complex. In Heliobacterium modesticaldum (strain ATCC 51547 / Ice1), this protein is Light-independent protochlorophyllide reductase subunit N.